The chain runs to 136 residues: Holo-[acyl-carrier-protein] synthase (136 aa).

Residues Asp8 and Glu57 each coordinate Mg(2+).

The protein belongs to the P-Pant transferase superfamily. AcpS family. Requires Mg(2+) as cofactor.

The protein resides in the cytoplasm. The catalysed reaction is apo-[ACP] + CoA = holo-[ACP] + adenosine 3',5'-bisphosphate + H(+). Functionally, transfers the 4'-phosphopantetheine moiety from coenzyme A to a Ser of acyl-carrier-protein. This Methylorubrum extorquens (strain PA1) (Methylobacterium extorquens) protein is Holo-[acyl-carrier-protein] synthase.